The primary structure comprises 72 residues: VIP peptides (72 aa).

At Ile-27 the chain carries Isoleucine amide. Asn-72 bears the Asparagine amide mark.

The protein belongs to the glucagon family.

It localises to the secreted. Its function is as follows. VIP is a neuropeptide involved in a diverse array of physiological processes through activating the PACAP subfamily of class B1 G protein-coupled receptors: VIP receptor 1 (VPR1) and VIP receptor 2 (VPR2). Abundantly expressed throughout the CNS and peripheral nervous systems where they primarily exert neuroprotective and immune modulatory roles. Also causes vasodilation, lowers arterial blood pressure, stimulates myocardial contractility, increases glycogenolysis and relaxes the smooth muscle of trachea, stomach and gall bladder. PHM-27 is a bioactive form from proteolysis of the same precursor protein, that causes vasodilation. It is a potent agonist of the calcitonin receptor CALCR, with similar efficacy as calcitonin. This chain is VIP peptides (VIP), found in Oryctolagus cuniculus (Rabbit).